Consider the following 335-residue polypeptide: Glyceraldehyde-3-phosphate dehydrogenase (335 aa).

NAD(+)-binding positions include 12–13 (RI), Asp34, Arg78, and Ser120. Residues 151–153 (SCT) and Thr182 each bind D-glyceraldehyde 3-phosphate. Catalysis depends on Cys152, which acts as the Nucleophile. Asn183 is a binding site for NAD(+). D-glyceraldehyde 3-phosphate is bound by residues Arg197, 210 to 211 (TG), and Arg233. Residue Asn315 coordinates NAD(+).

Belongs to the glyceraldehyde-3-phosphate dehydrogenase family. Homotetramer.

Its subcellular location is the cytoplasm. It catalyses the reaction D-glyceraldehyde 3-phosphate + phosphate + NAD(+) = (2R)-3-phospho-glyceroyl phosphate + NADH + H(+). It functions in the pathway carbohydrate degradation; glycolysis; pyruvate from D-glyceraldehyde 3-phosphate: step 1/5. Catalyzes the oxidative phosphorylation of glyceraldehyde 3-phosphate (G3P) to 1,3-bisphosphoglycerate (BPG) using the cofactor NAD. The first reaction step involves the formation of a hemiacetal intermediate between G3P and a cysteine residue, and this hemiacetal intermediate is then oxidized to a thioester, with concomitant reduction of NAD to NADH. The reduced NADH is then exchanged with the second NAD, and the thioester is attacked by a nucleophilic inorganic phosphate to produce BPG. The polypeptide is Glyceraldehyde-3-phosphate dehydrogenase (gap) (Geobacillus stearothermophilus (Bacillus stearothermophilus)).